The following is a 216-amino-acid chain: Probable nicotinate-nucleotide adenylyltransferase (216 aa).

The protein belongs to the NadD family.

It catalyses the reaction nicotinate beta-D-ribonucleotide + ATP + H(+) = deamido-NAD(+) + diphosphate. It functions in the pathway cofactor biosynthesis; NAD(+) biosynthesis; deamido-NAD(+) from nicotinate D-ribonucleotide: step 1/1. Its function is as follows. Catalyzes the reversible adenylation of nicotinate mononucleotide (NaMN) to nicotinic acid adenine dinucleotide (NaAD). The polypeptide is Probable nicotinate-nucleotide adenylyltransferase (Geobacter sp. (strain M21)).